We begin with the raw amino-acid sequence, 501 residues long: MSTPLMVLGTSSGAGKSLMSAALCRLLLRQGETPIPFKGQNMSNNAWVDESGGEMAYSQALQAWAAGLKPQCAMNPVLLKPQGDSTSEVIHLGQSVGTARAETYYEQWFRPGWSVIREALKDLQCSYTHGRLVLEGAGSPVEVNLQRRDLTNLRLAQFLRARCLLVADIERGGVFAQIMGTLSLLKPVEKQLIRGLLINRFRGRRELFDEGRDWLEAETGIPVIGVMPWLEELFPPEDSLDLLERRGKKNDAEIEIAVLKLPSLSNFSDLDPLEAEPTVQLRWVEPGTFLGMPDAVIIPGSKQTLRDLNSLNRSGLGSQLQTYAQSGGHVFGICGGMQMLGRTLADPLGLEGVTTTDPSSSMAGLNLLPLDTVFKRNKALSQCQRITQWPDNAKVKGFELHHGNSQLIQGSHESVLPMADDPSMGWVSKNESCGQVAGTYLHGIFENGRWRRLWLNLIRKQKGLADLPTDISNHEQQREQLLNRLADVFEEHVNINPLLGT.

In terms of domain architecture, GATase cobBQ-type spans 253–450 (EIEIAVLKLP…LHGIFENGRW (198 aa)). Cys334 serves as the catalytic Nucleophile. His442 is an active-site residue.

This sequence belongs to the CobB/CobQ family. CobQ subfamily.

It functions in the pathway cofactor biosynthesis; adenosylcobalamin biosynthesis. Catalyzes amidations at positions B, D, E, and G on adenosylcobyrinic A,C-diamide. NH(2) groups are provided by glutamine, and one molecule of ATP is hydrogenolyzed for each amidation. The protein is Cobyric acid synthase of Prochlorococcus marinus (strain MIT 9313).